Consider the following 813-residue polypeptide: Leucine--tRNA ligase (813 aa).

The 'HIGH' region motif lies at 41 to 51; sequence PYPSGTLHMGH. Positions 575–579 match the 'KMSKS' region motif; that stretch reads KMSKS. Lys578 contacts ATP.

It belongs to the class-I aminoacyl-tRNA synthetase family.

It is found in the cytoplasm. The enzyme catalyses tRNA(Leu) + L-leucine + ATP = L-leucyl-tRNA(Leu) + AMP + diphosphate. The protein is Leucine--tRNA ligase of Francisella philomiragia subsp. philomiragia (strain ATCC 25017 / CCUG 19701 / FSC 153 / O#319-036).